Consider the following 137-residue polypeptide: Secreted RxLR effector protein 67 (137 aa).

The signal sequence occupies residues M1–A18. The short motif at R32–R61 is the RxLR-dEER element. The tract at residues T40–S65 is disordered. Residues W114–A134 traverse the membrane as a helical segment.

The protein belongs to the RxLR effector family.

The protein resides in the secreted. It is found in the host cytoplasm. The protein localises to the host nucleus. Its subcellular location is the membrane. Effector that partially suppresses the tobacco programmed cell death induced by cell death-inducing proteins. This Plasmopara viticola (Downy mildew of grapevine) protein is Secreted RxLR effector protein 67.